The following is a 433-amino-acid chain: Elongation factor 1-alpha (433 aa).

The 223-residue stretch at 5-227 (KPHLNLVVIG…AFDFFKEPPR (223 aa)) folds into the tr-type G domain. The interval 14–21 (GHIDHGKS) is G1. Position 14 to 21 (14 to 21 (GHIDHGKS)) interacts with GTP. Residue Ser-21 coordinates Mg(2+). Residues 70-74 (GITID) are G2. Positions 91-94 (DAPG) are G3. GTP-binding positions include 91–95 (DAPGH) and 153–156 (NKMD). Positions 153 to 156 (NKMD) are G4. The interval 192–194 (SAW) is G5.

This sequence belongs to the TRAFAC class translation factor GTPase superfamily. Classic translation factor GTPase family. EF-Tu/EF-1A subfamily.

Its subcellular location is the cytoplasm. It catalyses the reaction GTP + H2O = GDP + phosphate + H(+). Its function is as follows. GTP hydrolase that promotes the GTP-dependent binding of aminoacyl-tRNA to the A-site of ribosomes during protein biosynthesis. This Thermofilum pendens (strain DSM 2475 / Hrk 5) protein is Elongation factor 1-alpha.